Here is a 326-residue protein sequence, read N- to C-terminus: DNA repair protein XRCC4 (326 aa).

Residues 1–212 form an interaction with IFFO1 region; the sequence is MERKVSRIYL…QLEESTKPER (212 aa). Phosphoserine; by PRKDC is present on serine 53. Coiled coils occupy residues 131 to 165 and 185 to 209; these read LDTI…FEKC and NEKK…ESTK. Residues 180–211 are interaction with LIG4; that stretch reads FILVLNEKKTKIRSLHKLLNEVQQLEESTKPE. Residue serine 193 is modified to Phosphoserine; by PRKDC. The tract at residues 203-326 is disordered; that stretch reads QLEESTKPER…RNSSPEDLFD (124 aa). The segment covering 206–226 has biased composition (basic and acidic residues); the sequence is ESTKPERENPCSDKTPEEHGL. Tyrosine 227 carries the post-translational modification Phosphotyrosine. Serine 230 is subject to Phosphoserine. Threonine 231 is modified (phosphothreonine). Serine 235 bears the Phosphoserine mark. Threonine 244 is modified (phosphothreonine). Serine 250 is modified (phosphoserine). Serine 254 is modified (phosphoserine; by PRKDC). The Nuclear localization signal signature appears at 264 to 269; it reads RKRRHR. A Glycyl lysine isopeptide (Lys-Gly) (interchain with G-Cter in ubiquitin) cross-link involves residue lysine 290. Serine 295 carries the post-translational modification Phosphoserine; by PRKDC. Residue serine 296 is modified to Phosphoserine. Phosphoserine; by PRKDC is present on residues serine 307 and serine 312. Polar residues predominate over residues 307 to 326; sequence SAENMSLETLRNSSPEDLFD. Position 315 is a phosphothreonine; by PRKDC (threonine 315). Residues serine 319 and serine 320 each carry the phosphoserine; by PRKDC modification.

The protein belongs to the XRCC4-XLF family. XRCC4 subfamily. As to quaternary structure, homodimer and homotetramer in solution. Interacts with NHEJ1/XLF; the interaction is direct and is mediated via a head-to-head interaction between N-terminal head regions. Interacts with LIG4; the LIG4-XRCC4 subcomplex has a 1:2 stoichiometry and XRCC4 is required for LIG4 stability. Component of the core long-range non-homologous end joining (NHEJ) complex (also named DNA-PK complex) composed of PRKDC, LIG4, XRCC4, XRCC6/Ku70, XRCC5/Ku86 and NHEJ1/XLF. Additional component of the NHEJ complex includes PAXX. Following autophosphorylation, PRKDC dissociates from DNA, leading to formation of the short-range NHEJ complex, composed of LIG4, XRCC4, XRCC6/Ku70, XRCC5/Ku86 and NHEJ1/XLF. Interacts with PRKDC; the interaction is direct. Interacts with XRCC6/Ku70; the interaction is direct. Interacts with APTX and APLF. Forms a heterotetramer with IFFO1; the interaction involves LIG4-free XRCC4 and leads to the relocalization of IFFO1 to the sites of DNA damage. Interacts with PNKP; mainly interacts with PNKP when phosphorylated at Thr-231, but is also able to interact at much lower level with PNKP when not unphosphorylated. Interacts with POLL (DNA polymerase lambda). Interacts with XKR4; interacts with the processed form of XKR4, which is cleaved by caspase. Post-translationally, phosphorylated by PRKDC at the C-terminus in response to DNA damage; Ser-254 and Ser-312 constitute the main phosphorylation sites. Phosphorylation by PRKDC at the C-terminus of XRCC4 and NHEJ1/XLF are highly redundant and regulate ability of the XRCC4-NHEJ1/XLF subcomplex to bridge DNA. Phosphorylation by PRKDC does not prevent interaction with NHEJ1/XLF but disrupts ability to bridge DNA and promotes detachment from DNA. Phosphorylation at Ser-319 and Ser-320 by PRKDC promotes recognition by the SCF(FBXW7) complex and subsequent ubiquitination via 'Lys-63'-linked ubiquitin. Phosphorylation at Thr-231 by CK2 promotes interaction with PNKP; regulating PNKP activity and localization to DNA damage sites. Phosphorylation by CK2 promotes interaction with APTX. Ubiquitinated at Lys-290 by the SCF(FBXW7) complex via 'Lys-63'-linked ubiquitination, thereby promoting double-strand break repair: the SCF(FBXW7) complex specifically recognizes XRCC4 when phosphorylated at Ser-319 and Ser-320 by PRKDC, and 'Lys-63'-linked ubiquitination facilitates DNA non-homologous end joining (NHEJ) by enhancing association with XRCC5/Ku80 and XRCC6/Ku70. Monoubiquitinated. In terms of processing, undergoes proteolytic processing by caspase-3 (CASP3). This generates the protein XRCC4, C-terminus (XRCC4/C), which translocates to the cytoplasm and activates phospholipid scramblase activity of XKR4, thereby promoting phosphatidylserine exposure on apoptotic cell surface.

It localises to the nucleus. The protein localises to the chromosome. The protein resides in the cytoplasm. DNA non-homologous end joining (NHEJ) core factor, required for double-strand break repair and V(D)J recombination. Acts as a scaffold protein that regulates recruitment of other proteins to DNA double-strand breaks (DSBs). Associates with NHEJ1/XLF to form alternating helical filaments that bridge DNA and act like a bandage, holding together the broken DNA until it is repaired. The XRCC4-NHEJ1/XLF subcomplex binds to the DNA fragments of a DSB in a highly diffusive manner and robustly bridges two independent DNA molecules, holding the broken DNA fragments in close proximity to one other. The mobility of the bridges ensures that the ends remain accessible for further processing by other repair factors. Plays a key role in the NHEJ ligation step of the broken DNA during DSB repair via direct interaction with DNA ligase IV (LIG4): the LIG4-XRCC4 subcomplex reseals the DNA breaks after the gap filling is completed. XRCC4 stabilizes LIG4, regulates its subcellular localization and enhances LIG4's joining activity. Binding of the LIG4-XRCC4 subcomplex to DNA ends is dependent on the assembly of the DNA-dependent protein kinase complex DNA-PK to these DNA ends. Promotes displacement of PNKP from processed strand break termini. In terms of biological role, acts as an activator of the phospholipid scramblase activity of XKR4. This form, which is generated upon caspase-3 (CASP3) cleavage, translocates into the cytoplasm and interacts with XKR4, thereby promoting phosphatidylserine scramblase activity of XKR4 and leading to phosphatidylserine exposure on apoptotic cell surface. This Mus musculus (Mouse) protein is DNA repair protein XRCC4.